Here is a 268-residue protein sequence, read N- to C-terminus: Indole-3-glycerol phosphate synthase (268 aa).

It belongs to the TrpC family.

The enzyme catalyses 1-(2-carboxyphenylamino)-1-deoxy-D-ribulose 5-phosphate + H(+) = (1S,2R)-1-C-(indol-3-yl)glycerol 3-phosphate + CO2 + H2O. Its pathway is amino-acid biosynthesis; L-tryptophan biosynthesis; L-tryptophan from chorismate: step 4/5. The protein is Indole-3-glycerol phosphate synthase of Magnetococcus marinus (strain ATCC BAA-1437 / JCM 17883 / MC-1).